A 275-amino-acid polypeptide reads, in one-letter code: Diaminopimelate epimerase (275 aa).

2 residues coordinate substrate: Asn20 and Asn63. The active-site Proton donor is the Cys72. Substrate contacts are provided by residues 73–74 (GN), Asn179, and 197–198 (ER). The active-site Proton acceptor is Cys207. 208 to 209 (GT) lines the substrate pocket.

It belongs to the diaminopimelate epimerase family. In terms of assembly, homodimer.

Its subcellular location is the cytoplasm. It carries out the reaction (2S,6S)-2,6-diaminopimelate = meso-2,6-diaminopimelate. It functions in the pathway amino-acid biosynthesis; L-lysine biosynthesis via DAP pathway; DL-2,6-diaminopimelate from LL-2,6-diaminopimelate: step 1/1. Catalyzes the stereoinversion of LL-2,6-diaminopimelate (L,L-DAP) to meso-diaminopimelate (meso-DAP), a precursor of L-lysine and an essential component of the bacterial peptidoglycan. The polypeptide is Diaminopimelate epimerase (Chlamydia trachomatis serovar L2 (strain ATCC VR-902B / DSM 19102 / 434/Bu)).